We begin with the raw amino-acid sequence, 308 residues long: Probable manganese-dependent inorganic pyrophosphatase (308 aa).

Residues H9, D13, D15, D75, H97, and D149 each coordinate Mn(2+).

Belongs to the PPase class C family. The cofactor is Mn(2+).

The protein resides in the cytoplasm. The catalysed reaction is diphosphate + H2O = 2 phosphate + H(+). This chain is Probable manganese-dependent inorganic pyrophosphatase, found in Listeria monocytogenes serotype 4b (strain CLIP80459).